Here is a 501-residue protein sequence, read N- to C-terminus: Cytochrome P450 4d2 (501 aa).

2 residues coordinate heme: Glu-311 and Cys-449.

This sequence belongs to the cytochrome P450 family. Heme serves as cofactor.

Its subcellular location is the endoplasmic reticulum membrane. It localises to the microsome membrane. Involved in the metabolism of insect hormones and in the breakdown of synthetic insecticides. This is Cytochrome P450 4d2 (Cyp4d2) from Drosophila melanogaster (Fruit fly).